Consider the following 1219-residue polypeptide: MPFYRRTVVPQRLCPRNPPQPLAELRDVSHLAALSLLRQLADLCGHSLALLEDLEGHLLALGRRTDSLYRRTVRLRRRLPCRLLGPEDDEELLAAANSGRENATATAHSRSSWRQPVNVFLSSGRPPSVEELLREAQLNLQSLLQEEYEEQYSEARLLGQTFRSSDGAPEPTPSPRPQSAKRLEFVLMPAKRQLSEDETTTQGVRAPEACLSLSTANKQSAWNDPFPLPILKERLWLQPCSTQSDLVPINISGQQFDRHASFRHSLFNTETAVNPKSTLRRRRTIIGFSNFSQRDQGHSSSPTGSLARSATSDIRPGHSAPQVVQGRVAVGQEARFPSLTSPGLRHSSSEPGDAHQARSASDHPGMESMAVVYSVPSSCNGPTESTFSTSWKGDAFTYMTPSASSQGNQVSENGKNPSSGNSWVPLNTLPPLVPKEAATLFVTRDNPAGCTGLPSYSEHPTLRRQIPERPPKIGLLARGTSRLETGPGGTNRFRERSLSVPTDSGVTSVDYDEEQKTSETRILPYASTSSEGSNSTDNIAALSTEQEARHRRQRSKSISLKKAKKKPSPPMRSVSLVKDEPALPPEGELVLPKDQRPRSLCLSLEHQGHHPPHPDAQGHPAVPMLKDPGSTQFSHHWYLTDWKSGDTYQSLSSSSTATGTTVIECTQVQGSSESLASPSTSRATTPSQLSIEVEAREVASPGRPTGLMSPSSGYSSQSETPTPTVSMSLTLGHLPPPSASVRVRPVVPERKSSLPPTSPMEKICKSRLSFDLPLTSSTTLDLSGMSISIRSKTKVSRHHSDTNFGVKLAQKTSPNQPIMPMVTQSDLRSVRLRSVSKSEPEDDIESPDYIEEPGAEEVFTMPERKVKPPIAEKPPLARRPPSLVHRPPSLPGEYPLTSPTMAMASRSSIPHMKQLPQDSYTVLRKPKSPSFPGESTASSSLVLSPLASSSGAFFSGTQQPPQASVEDGGPKVRALPERIGLQSQEEAEKKMTKIPPPVPKKPSVLYLPLTSPVAQMDACMAEPRLPFSPIITLEEDGKCPSTGDDQKSPGKGVTSPLHTDTEKEAISPGRSVEPSAEEKSLISDKTAEWIAEEEDDVFVASRTTEDLFTVIHRSKRKLLGWKETGEGFTGSKPSSHSPVKNTADSPTGEAAAAPGPSSSACLDAGRNDDFKALLQKKGSKATPRTRPSAAELLKTTNPLARRIIAQFSKDYEPTDNPST.

10 disordered regions span residues 162-181 (FRSS…QSAK), 288-321 (FSNF…HSAP), 336-364 (FPSL…SDHP), 400-423 (TPSA…GNSW), 474-591 (GLLA…ELVL), 669-741 (QGSS…SASV), 854-938 (GAEE…STAS), 979-1003 (IGLQ…KKPS), 1033-1087 (LEED…DKTA), and 1121-1197 (WKET…KTTN). Residues 288 to 312 (FSNFSQRDQGHSSSPTGSLARSATS) are compositionally biased toward polar residues. A compositionally biased stretch (basic and acidic residues) spans 352 to 364 (GDAHQARSASDHP). The residue at position 499 (Ser-499) is a Phosphoserine. A compositionally biased stretch (polar residues) spans 526–545 (ASTSSEGSNSTDNIAALSTE). Positions 549 to 567 (RHRRQRSKSISLKKAKKKP) are enriched in basic residues. Ser-575 is modified (phosphoserine). Positions 674–687 (SLASPSTSRATTPS) are enriched in low complexity. At Ser-690 the chain carries Phosphoserine. Polar residues-rich tracts occupy residues 708-729 (MSPS…SMSL) and 897-908 (TSPTMAMASRSS). The residue at position 1048 (Ser-1048) is a Phosphoserine. A compositionally biased stretch (basic and acidic residues) spans 1076–1087 (AEEKSLISDKTA). Residues 1131-1144 (SKPSSHSPVKNTAD) are compositionally biased toward polar residues. Positions 1145 to 1160 (SPTGEAAAAPGPSSSA) are enriched in low complexity. The residue at position 1208 (Ser-1208) is a Phosphoserine.

The protein belongs to the NHS family.

This chain is NHS-like protein 2, found in Mus musculus (Mouse).